Here is a 673-residue protein sequence, read N- to C-terminus: Methionine--tRNA ligase (673 aa).

The short motif at 14 to 24 (YYPSGKLHIGN) is the 'HIGH' region element. The 'KMSKS' region motif lies at 310 to 314 (KMSKS). K313 serves as a coordination point for ATP. A tRNA-binding domain is found at 571–673 (VFDKVELKVA…SEAPNGSSIS (103 aa)).

The protein belongs to the class-I aminoacyl-tRNA synthetase family. MetG type 2B subfamily. Homodimer.

Its subcellular location is the cytoplasm. The enzyme catalyses tRNA(Met) + L-methionine + ATP = L-methionyl-tRNA(Met) + AMP + diphosphate. Functionally, is required not only for elongation of protein synthesis but also for the initiation of all mRNA translation through initiator tRNA(fMet) aminoacylation. This Oceanobacillus iheyensis (strain DSM 14371 / CIP 107618 / JCM 11309 / KCTC 3954 / HTE831) protein is Methionine--tRNA ligase (metG).